A 502-amino-acid polypeptide reads, in one-letter code: Protein O-glucosyltransferase 2 (502 aa).

Residues 1-19 (MFGTLLLYCFFLATVPALA) form the signal peptide. The Filamin repeat unit spans residues 24 to 130 (ERQLSPEKSE…VAKSPYILKG (107 aa)). Residues N302 and N414 are each glycosylated (N-linked (GlcNAc...) asparagine). The Prevents secretion from ER signature appears at 499–502 (KDEL).

It belongs to the KDELC family. Post-translationally, N-glycosylated.

The protein localises to the endoplasmic reticulum lumen. It catalyses the reaction L-seryl-[EGF-like domain protein] + UDP-alpha-D-glucose = 3-O-(beta-D-glucosyl)-L-seryl-[EGF-like domain protein] + UDP + H(+). The enzyme catalyses L-seryl-[EGF-like domain protein] + UDP-alpha-D-xylose = 3-O-(beta-D-xylosyl)-L-seryl-[EGF-like domain protein] + UDP + H(+). It participates in protein modification; protein glycosylation. Protein glucosyltransferase that catalyzes the transfer of glucose from UDP-glucose to a serine residue within the consensus sequence peptide C-X-N-T-X-G-S-F-X-C. Can also catalyze the transfer of xylose from UDP-xylose but less efficiently. Specifically targets extracellular EGF repeats of proteins such as NOTCH1, NOTCH3, FBN1, FBN2 and LTBP1. May regulate the transport of NOTCH1 and NOTCH3 to the plasma membrane and thereby the Notch signaling pathway. The chain is Protein O-glucosyltransferase 2 from Homo sapiens (Human).